The chain runs to 69 residues: Cold shock-like protein CspE (69 aa).

In terms of domain architecture, CSD spans 6–66 (GNVKWFNESK…GAKGPSAANV (61 aa)).

The protein localises to the cytoplasm. In Escherichia coli O6:H1 (strain CFT073 / ATCC 700928 / UPEC), this protein is Cold shock-like protein CspE (cspE).